We begin with the raw amino-acid sequence, 245 residues long: Short-chain dehydrogenase/reductase pyiH (245 aa).

NADP(+)-binding residues include Ile18, Arg42, Asp68, and Asn95. The active-site Proton donor is the Ser150.

This sequence belongs to the short-chain dehydrogenases/reductases (SDR) family.

It participates in mycotoxin biosynthesis. Its function is as follows. Short-chain dehydrogenase/reductase; part of the gene cluster that mediates the biosynthesis of the mycotoxin pyrichalasin H, a tyrosine-derived cytochalasan that inhibits the growth of rice seedlings, but also inhibits lymphocyte capping and actin polymerization and alters cell morphology. Pyrichalasin H is indicated as the responsible agent for the genus-specific pathogenicity of M.grisea toward crabgrass. The first step in the pathway is catalyzed by the O-methyltransferase pyiA which methylates free tyrosine to generate the precursor O-methyltyrosine. The hybrid PKS-NRPS pyiS, assisted by the enoyl reductase pyiC, are responsible for fusion of the O-methyltyrosine precursor and the polyketide backbone. The polyketide synthase module (PKS) of pyiS is responsible for the synthesis of the polyketide backbone and the downstream nonribosomal peptide synthetase (NRPS) amidates the carboxyl end of the polyketide with the O-methyltyrosine precursor. As the NRPS A-domain demonstrates substrate tolerance, pyiS can also use phenylalanine, tyrosine and even para-chlorophenylalanine as amino acid precursor, which leads to the production of novel cytochalasans, including halogenated cytochalasans. Because pyiS lacks a designated enoylreductase (ER) domain, the required activity is provided the enoyl reductase pyiC. Reduction by the hydrolyase pyiE leads to 1,5-dihydropyrrolone, which is substrate for dehydration and intra-molecular Diels-Alder cyclization by the Diels-Alderase pyiF to yield the required isoindolone-fused macrocycle. The tailoring cytochrome P450 monooxygenases piyD and piyG catalyze the hydroxylation at C-18 and C-7, respectivily, whereas the short-chain dehydrogenase/reductase pyiH reduces the carbonyl at C-21 in preparation for the transfer of an acetyl group by the acetyltransferase pyiB. These 3 reactions whose order is not clear yet, lead to the production of O-methylpyrichalasin J, a deacetylated pyrichalasin H. Finally, pyiB to converts O-methylpyrichalasin J into the final product pyrichalasin H via acetylation of C-21. The protein is Short-chain dehydrogenase/reductase pyiH of Pyricularia grisea (Crabgrass-specific blast fungus).